Consider the following 593-residue polypeptide: Serine/threonine-protein kinase PAK 4 (593 aa).

The region spanning 11–24 (ISAPSNFEHRVHTG) is the CRIB domain. The linker stretch occupies residues 25–322 (FDQHEQKFTG…VVDPGDPRSY (298 aa)). Ser-41 is modified (phosphoserine). Lys-78 carries the post-translational modification N6-methyllysine. A disordered region spans residues 95–303 (TRSNSLRRES…PQREPQRVSH (209 aa)). A Phosphoserine modification is found at Ser-104. Residues 118–133 (LEERAAPARMAPDKAG) show a composition bias toward basic and acidic residues. Residue Ser-148 is modified to Phosphoserine. Positions 149–164 (GDRRRVGPEKRPKSSR) are enriched in basic and acidic residues. Phosphoserine is present on Ser-181. A compositionally biased stretch (polar residues) spans 184–197 (DVSTPQPGSLTSGT). Position 187 is a phosphothreonine (Thr-187). The residue at position 195 (Ser-195) is a Phosphoserine. Position 207 is a phosphothreonine (Thr-207). Residues 238 to 258 (AAPQSSSSSRPPTRARGAPSP) show a composition bias toward low complexity. Ser-257 and Ser-266 each carry phosphoserine. Low complexity predominate over residues 267–280 (EPQLAPPARALAAP). The segment covering 281–292 (AVPPAPGPPGPR) has biased composition (pro residues). At Ser-293 the chain carries Phosphoserine. Residues 294 to 303 (PQREPQRVSH) are compositionally biased toward basic and acidic residues. Positions 323-574 (LDNFIKIGEG…AAELLKHPFL (252 aa)) constitute a Protein kinase domain. ATP is bound by residues 329–337 (IGEGSTGIV) and Lys-352. Catalysis depends on Asp-442, which acts as the Proton acceptor. Ser-476 bears the Phosphoserine; by autocatalysis mark.

This sequence belongs to the protein kinase superfamily. STE Ser/Thr protein kinase family. STE20 subfamily. As to quaternary structure, interacts tightly with GTP-bound but not GDP-bound CDC42/p21 and weakly with RAC1. Interacts with FGFR2 and GRB2. Interacts with INKA1. Interacts with SH3RF2. Interacts with RHOU and PAXI; the PAK4-RHOU complex protects RHOU from ubiquitination and acts as a scaffold to suppport paxillin/PAXI phosphorylation. Autophosphorylated on serine residues when activated by CDC42/p21. Phosphorylated on tyrosine residues upon stimulation of FGFR2. Methylated by SETD6. Post-translationally, polyubiquitinated, leading to its proteasomal degradation.

The protein localises to the cytoplasm. It catalyses the reaction L-seryl-[protein] + ATP = O-phospho-L-seryl-[protein] + ADP + H(+). It carries out the reaction L-threonyl-[protein] + ATP = O-phospho-L-threonyl-[protein] + ADP + H(+). Its activity is regulated as follows. Inhibited by INKA1; which inhibits the serine/threonine-protein kinase activity by binding PAK4 in a substrate-like manner. Serine/threonine protein kinase that plays a role in a variety of different signaling pathways including cytoskeleton regulation, cell migration, growth, proliferation or cell survival. Activation by various effectors including growth factor receptors or active CDC42 and RAC1 results in a conformational change and a subsequent autophosphorylation on several serine and/or threonine residues. Phosphorylates and inactivates the protein phosphatase SSH1, leading to increased inhibitory phosphorylation of the actin binding/depolymerizing factor cofilin. Decreased cofilin activity may lead to stabilization of actin filaments. Phosphorylates LIMK1, a kinase that also inhibits the activity of cofilin. Phosphorylates integrin beta5/ITGB5 and thus regulates cell motility. Phosphorylates ARHGEF2 and activates the downstream target RHOA that plays a role in the regulation of assembly of focal adhesions and actin stress fibers. Stimulates cell survival by phosphorylating the BCL2 antagonist of cell death BAD. Alternatively, inhibits apoptosis by preventing caspase-8 binding to death domain receptors in a kinase independent manner. Plays a role in cell-cycle progression by controlling levels of the cell-cycle regulatory protein CDKN1A and by phosphorylating RAN. Promotes kinase-independent stabilization of RHOU, thereby contributing to focal adhesion disassembly during cell migration. This chain is Serine/threonine-protein kinase PAK 4, found in Mus musculus (Mouse).